The primary structure comprises 546 residues: MDKSKINLAVIVPLFFIMLYLLPLGLRDLWSPDELRYAEIAREMVDSGNWIVPTFNDIRYFEKPVMGHWMNAISQVLFGENNFSVRAASAFSTLGAAFCLFLLVGRFANRKQAWVTVSVFLSLFLVSNLGTYSVLDGMLNLWLTAAFTAFFYAADSPTTSQRCRFYGLAGLFCACALLTKGFLALALPVIVVVPFMIWQRQLVDILRWGWWVMLVALIVTLPWALAIHAAEPDYWHYFFWVEHIQRFAAEDAQHTSPAWYYLPYLLLGTLPWLFLAPSAIKHLKGHWQSPLLRYALLWALIPFIFFSAAKGKLVTYILPCMAPLAIILAQGIISAFENRAKGLKIGSVINCAFFSLISVAVIVLFYMGRLPLEAEEFYRPWLLVVVCGSWAVLAYISIKAKSLEGKIASYMLMPLSLFLLAWAIIPNISIDSKMPGRFLEQVSPLVSDDAILIADYPSTMSAFNWYFKRRDVYLTGNTGEVSYGIGYDDAKHKYVAPSLLGEFIRKQSVPVVILFREMDVPQSLPEPDKRIERGKFTLVYYDRVKR.

The next 12 helical transmembrane spans lie at 6–26, 87–107, 113–133, 177–197, 208–228, 260–280, 289–309, 313–333, 345–365, 380–400, 410–430, and 450–467; these read INLA…PLGL, AASA…VGRF, AWVT…GTYS, LLTK…PFMI, WGWW…LAIH, YYLP…PSAI, SPLL…FSAA, LVTY…QGII, IGSV…IVLF, PWLL…SIKA, YMLM…NISI, and AILI…NWYF.

It belongs to the glycosyltransferase 83 family.

It is found in the cell inner membrane. It catalyses the reaction 4-amino-4-deoxy-alpha-L-arabinopyranosyl di-trans,octa-cis-undecaprenyl phosphate + lipid IVA = lipid IIA + di-trans,octa-cis-undecaprenyl phosphate.. It participates in lipopolysaccharide metabolism; 4-amino-4-deoxy-beta-L-arabinose-lipid A biosynthesis. Its function is as follows. Catalyzes the transfer of the L-Ara4N moiety of the glycolipid undecaprenyl phosphate-alpha-L-Ara4N to lipid A. The modified arabinose is attached to lipid A and is required for resistance to polymyxin and cationic antimicrobial peptides. The polypeptide is Undecaprenyl phosphate-alpha-4-amino-4-deoxy-L-arabinose arabinosyl transferase (Shewanella sediminis (strain HAW-EB3)).